Consider the following 700-residue polypeptide: UvrABC system protein C (700 aa).

The 80-residue stretch at 11 to 90 (TTPGVYLYKD…IKKHRPRYNI (80 aa)) folds into the GIY-YIG domain. Residues 200–235 (TELIDMLRADMQAASDALEFEEAALLRDQLQAVERT) form the UVR domain.

Belongs to the UvrC family. Interacts with UvrB in an incision complex.

The protein resides in the cytoplasm. In terms of biological role, the UvrABC repair system catalyzes the recognition and processing of DNA lesions. UvrC both incises the 5' and 3' sides of the lesion. The N-terminal half is responsible for the 3' incision and the C-terminal half is responsible for the 5' incision. This Oleidesulfovibrio alaskensis (strain ATCC BAA-1058 / DSM 17464 / G20) (Desulfovibrio alaskensis) protein is UvrABC system protein C.